Consider the following 341-residue polypeptide: tRNA N6-adenosine threonylcarbamoyltransferase (341 aa).

Fe cation is bound by residues H111 and H115. Substrate contacts are provided by residues L134–G138, D167, G180, and N272. D300 provides a ligand contact to Fe cation.

The protein belongs to the KAE1 / TsaD family. The cofactor is Fe(2+).

It is found in the cytoplasm. The catalysed reaction is L-threonylcarbamoyladenylate + adenosine(37) in tRNA = N(6)-L-threonylcarbamoyladenosine(37) in tRNA + AMP + H(+). Required for the formation of a threonylcarbamoyl group on adenosine at position 37 (t(6)A37) in tRNAs that read codons beginning with adenine. Is involved in the transfer of the threonylcarbamoyl moiety of threonylcarbamoyl-AMP (TC-AMP) to the N6 group of A37, together with TsaE and TsaB. TsaD likely plays a direct catalytic role in this reaction. The chain is tRNA N6-adenosine threonylcarbamoyltransferase from Edwardsiella ictaluri (strain 93-146).